The following is a 305-amino-acid chain: Tyrosine recombinase XerC (305 aa).

The region spanning 4–95 (TSIQELINKW…AVKNFYKFLE (92 aa)) is the Core-binding (CB) domain. A Tyr recombinase domain is found at 116 to 298 (LLPKSLSEDD…SIKHLVSVYT (183 aa)). Catalysis depends on residues R159, K182, H250, R253, and H276. Y285 serves as the catalytic O-(3'-phospho-DNA)-tyrosine intermediate.

This sequence belongs to the 'phage' integrase family. XerC subfamily. Forms a cyclic heterotetrameric complex composed of two molecules of XerC and two molecules of XerD.

The protein localises to the cytoplasm. Site-specific tyrosine recombinase, which acts by catalyzing the cutting and rejoining of the recombining DNA molecules. The XerC-XerD complex is essential to convert dimers of the bacterial chromosome into monomers to permit their segregation at cell division. It also contributes to the segregational stability of plasmids. In Rickettsia canadensis (strain McKiel), this protein is Tyrosine recombinase XerC.